A 309-amino-acid polypeptide reads, in one-letter code: Ribosomal RNA small subunit methyltransferase H (309 aa).

Residues 36-38 (AGH), Asp-55, Phe-81, Asp-102, and Gln-109 contribute to the S-adenosyl-L-methionine site.

It belongs to the methyltransferase superfamily. RsmH family.

The protein resides in the cytoplasm. It catalyses the reaction cytidine(1402) in 16S rRNA + S-adenosyl-L-methionine = N(4)-methylcytidine(1402) in 16S rRNA + S-adenosyl-L-homocysteine + H(+). In terms of biological role, specifically methylates the N4 position of cytidine in position 1402 (C1402) of 16S rRNA. This chain is Ribosomal RNA small subunit methyltransferase H, found in Mycoplasma genitalium (strain ATCC 33530 / DSM 19775 / NCTC 10195 / G37) (Mycoplasmoides genitalium).